The primary structure comprises 354 residues: uncharacterized protein (354 aa).

In terms of domain architecture, ABC transporter spans 48 to 285 (VETWEISKIY…DEGYEVVLKG (238 aa)). 87–94 (GPNGAGKT) is a binding site for ATP.

It belongs to the ABC transporter superfamily.

This is an uncharacterized protein from Synechocystis sp. (strain ATCC 27184 / PCC 6803 / Kazusa).